We begin with the raw amino-acid sequence, 291 residues long: Citrate lyase subunit beta (291 aa).

Substrate is bound by residues arginine 66 and glutamate 129. Positions 129 and 156 each coordinate Mg(2+).

This sequence belongs to the HpcH/HpaI aldolase family. Citrate lyase beta subunit subfamily. As to quaternary structure, oligomer with a subunit composition of (alpha,beta,gamma)6. The cofactor is Mg(2+).

The protein localises to the cytoplasm. The catalysed reaction is citrate = oxaloacetate + acetate. The enzyme catalyses (3S)-citryl-CoA = oxaloacetate + acetyl-CoA. In terms of biological role, represents a citryl-ACP lyase. This is Citrate lyase subunit beta (citE) from Haemophilus influenzae (strain ATCC 51907 / DSM 11121 / KW20 / Rd).